The sequence spans 371 residues: MKLDHLVLKNYRNYAAVDTTFSPEINVLIGANAQGKTNLLESIYVLALARSHRTNNDKELIRFGSEFARVSGQVSRQSGSHQLELIISHQGKRARIDRIEQPKLSQYLGHFNVILFAPEDLAIVKGSPAGRRRFIDMEFGQMSPKYLYNLSQYKTFLKQRNAYLKQLKYHQAKDLVYLDVLTDSLAAFGAELITARAKLLETMSDYAATIQQDITKGRESLHFSYQTQVDPSLRGDSEQVYTALGEMFAKQQAREIEQGTSLVGPQRDDVLFIVNDKDVANFGSQGQQRTTALAVKLAEIDLMKDQTGEYPVLLLDDVLSELDAARQTHLLKAIQTKVQTFLTTTSLEGIQKEIIATPAVFKVDEGTLARA.

30 to 37 (GANAQGKT) serves as a coordination point for ATP.

The protein belongs to the RecF family.

The protein localises to the cytoplasm. Its function is as follows. The RecF protein is involved in DNA metabolism; it is required for DNA replication and normal SOS inducibility. RecF binds preferentially to single-stranded, linear DNA. It also seems to bind ATP. The sequence is that of DNA replication and repair protein RecF from Lacticaseibacillus casei (strain BL23) (Lactobacillus casei).